Reading from the N-terminus, the 282-residue chain is Elongation factor Ts (282 aa).

The interval 80-83 is involved in Mg(2+) ion dislocation from EF-Tu; that stretch reads TDFV.

It belongs to the EF-Ts family.

Its subcellular location is the cytoplasm. Its function is as follows. Associates with the EF-Tu.GDP complex and induces the exchange of GDP to GTP. It remains bound to the aminoacyl-tRNA.EF-Tu.GTP complex up to the GTP hydrolysis stage on the ribosome. The protein is Elongation factor Ts of Chlamydia felis (strain Fe/C-56) (Chlamydophila felis).